We begin with the raw amino-acid sequence, 302 residues long: Sulfate adenylyltransferase subunit 2 (302 aa).

Belongs to the PAPS reductase family. CysD subfamily. In terms of assembly, heterodimer composed of CysD, the smaller subunit, and CysN.

The enzyme catalyses sulfate + ATP + H(+) = adenosine 5'-phosphosulfate + diphosphate. It participates in sulfur metabolism; hydrogen sulfide biosynthesis; sulfite from sulfate: step 1/3. With CysN forms the ATP sulfurylase (ATPS) that catalyzes the adenylation of sulfate producing adenosine 5'-phosphosulfate (APS) and diphosphate, the first enzymatic step in sulfur assimilation pathway. APS synthesis involves the formation of a high-energy phosphoric-sulfuric acid anhydride bond driven by GTP hydrolysis by CysN coupled to ATP hydrolysis by CysD. The sequence is that of Sulfate adenylyltransferase subunit 2 from Pectobacterium carotovorum subsp. carotovorum (strain PC1).